A 139-amino-acid chain; its full sequence is Probable disulfide formation protein C 2 (139 aa).

Residues Lys-6–Phe-25 form a helical membrane-spanning segment. Cys-35 and Cys-38 form a disulfide bridge. Transmembrane regions (helical) follow at residues Tyr-40–Lys-59 and Tyr-66–Thr-83. Cysteines 95 and 101 form a disulfide. The chain crosses the membrane as a helical span at residues Gly-110–Ser-133.

The protein belongs to the DsbB family. BdbC subfamily.

The protein localises to the cell membrane. Its function is as follows. Required for disulfide bond formation in some proteins. The polypeptide is Probable disulfide formation protein C 2 (bdbC2) (Bacillus cereus (strain ATCC 10987 / NRS 248)).